We begin with the raw amino-acid sequence, 383 residues long: AP-1-like transcription factor YAP6 (383 aa).

Disordered stretches follow at residues 1-64 (MQNP…ISVN), 83-113 (DYRS…SYNR), and 168-239 (TLPS…KAFR). Residues 13–64 (NQGSSSMATYNASEKNLNEHPSPQIAQPSTSQKLPYRINPTTTNGDTDISVN) are compositionally biased toward polar residues. Residues 88 to 101 (HQSPIHPSYIIPPH) show a composition bias toward low complexity. Residues 168–184 (TLPSRNTSVTTAPPSFQ) are compositionally biased toward polar residues. Low complexity predominate over residues 185–206 (NSADTAKNSADNNDNNDNVTKP). Over residues 213–222 (QLISSSGKTL) the composition is skewed to polar residues. A bZIP domain is found at 221 to 284 (TLRNTRRAAQ…NDNNILIAQH (64 aa)). Positions 223–247 (RNTRRAAQNRTAQKAFRQRKEKYIK) are basic motif. Over residues 227-237 (RAAQNRTAQKA) the composition is skewed to low complexity. Positions 249–277 (LEQKSKIFDDLLAENNNFKSLNDSLRNDN) are leucine-zipper.

It belongs to the bZIP family. YAP subfamily. Homodimer.

It is found in the nucleus. In terms of biological role, transcription activator involved in the regulation of genes expressed in response to environmental changes and metabolic requirements. According to genome-wide promoter binding and gene expression studies it regulates, among others, genes involved in ribosome biogenesis, protein synthesis, carbohydrate metabolism, and carbohydrate transport. It may also be involved in pleiotropic drug resistance. When overexpressed, it confers resistance to cisplatin, methylmethanosulfonate, and mitomycin C, and increases cellular tolerance to sodium and lithium. The chain is AP-1-like transcription factor YAP6 (YAP6) from Saccharomyces cerevisiae (strain ATCC 204508 / S288c) (Baker's yeast).